The following is an 871-amino-acid chain: Transient receptor potential cation channel subfamily V member 4 (871 aa).

The disordered stretch occupies residues 1–68 (MADSSEGPRA…GPGDGRPNLR (68 aa)). Residues 1–469 (MADSSEGPRA…RDKWRKFGAV (469 aa)) lie on the Cytoplasmic side of the membrane. Residue Tyr110 is modified to Phosphotyrosine. ATP contacts are provided by residues Lys192, Lys197, Asn201, 236-239 (YRGQ), and Arg248. ANK repeat units follow at residues 237 to 266 (RGQT…DVHA) and 284 to 313 (FGEL…KKAD). 249 to 251 (RCK) provides a ligand contact to a 1,2-diacyl-sn-glycero-3-phospho-(1D-myo-inositol-4,5-bisphosphate). Tyr253 bears the Phosphotyrosine mark. Residues 296–299 (NQPH) and Lys344 each bind a 1,2-diacyl-sn-glycero-3-phospho-(1D-myo-inositol-4,5-bisphosphate). Residues 369–398 (DGLSPLMMAAKTGKIGIFQHIIRREVTDED) form an ANK 3 repeat. Residues 470–490 (SFYINVVSYLCAMVIFTLTAY) form a helical membrane-spanning segment. Topologically, residues 491–507 (YQPLEGTPPYPYRTTVD) are extracellular. The helical transmembrane segment at 508-534 (YLRLAGEVITLFTGVLFFFTNIKDLFM) threads the bilayer. Over 535–547 (KKCPGVNSLFIDG) the chain is Cytoplasmic. Residues 548–568 (SFQLLYFIYSVLVIVSAALYL) form a helical membrane-spanning segment. Over 569 to 572 (AGIE) the chain is Extracellular. A helical membrane pass occupies residues 573–593 (AYLAVMVFALVLGWMNALYFT). Over 594-608 (RGLKLTGTYSIMIQK) the chain is Cytoplasmic. A helical transmembrane segment spans residues 609–636 (ILFKDLFRFLLVYLLFMIGYASALVSLL). The Extracellular segment spans residues 637 to 665 (NPCANMKVCNEDQTNCTVPTYPSCRDSET). An intramembrane region (pore-forming) is located at residues 666–685 (FSTFLLDLFKLTIGMGDLEM). A Selectivity filter motif is present at residues 679-682 (GMGD). Asp682 contacts Ca(2+). Residues 686–693 (LSSTKYPV) lie on the Extracellular side of the membrane. A helical membrane pass occupies residues 694–722 (VFIILLVTYIILTFVLLLNMLIALMGETV). Topologically, residues 723 to 871 (GQVSKESKHI…RKWRTDDAPL (149 aa)) are cytoplasmic. At Tyr805 the chain carries Phosphotyrosine. The interval 812–831 (HTVGRLRRDRWSSVVPRVVE) is interaction with calmodulin and ITPR3. At Ser824 the chain carries Phosphoserine. The interval 849-871 (GNPRCDGHQQGYPRKWRTDDAPL) is disordered.

Belongs to the transient receptor (TC 1.A.4) family. TrpV subfamily. TRPV4 sub-subfamily. As to quaternary structure, homotetramer. Self-associates in an isoform-specific manner. Isoform 1 and isoform 5 can oligomerize, but isoform 2, isoform 4 and isoform 6 cannot oligomerize. Interacts with calmodulin. Interacts with Map7 and Src family Tyr protein kinases LYN, SRC, FYN, HCK, LCK and YES. Interacts with CTNNB1. The TRPV4 and CTNNB1 complex can interact with CDH1. Interacts with PACSIN1, PACSIN2 and PACSIN3 (via SH3 domain). Part of a complex containing MLC1, AQP4, HEPACAM and ATP1B1. Interacts with ITPR3. Interacts with AQP5; the interaction is probably indirect and regulates TRPV4 activation by hypotonicity. Interacts with ANO1. Interacts (via C-terminus) with PKD2 (via C-terminus). Interacts with DDX3X; this interaction is decreased when the channel is activated. Post-translationally, N-glycosylated. In terms of tissue distribution, found in the synoviocytes from patients with (RA) and without (CTR) rheumatoid arthritis (at protein level).

It is found in the cell membrane. Its subcellular location is the apical cell membrane. The protein localises to the cell junction. The protein resides in the adherens junction. It localises to the cell projection. It is found in the cilium. Its subcellular location is the endoplasmic reticulum. The enzyme catalyses Ca(2+)(in) = Ca(2+)(out). With respect to regulation, channel activation is inhibited by binding to phosphatidylinositol-4,5-bisphosphate, and to a much lesser degree by phosphatidylinositol-3,4,5-trisphosphate. Not inhibited by phosphatidylinositol-3,4-bisphosphate and phosphatidylinositol-3,5-bisphosphate. Non-selective calcium permeant cation channel involved in osmotic sensitivity and mechanosensitivity. Activation by exposure to hypotonicity within the physiological range exhibits an outward rectification. Also activated by heat, low pH, citrate and phorbol esters. Increase of intracellular Ca(2+) potentiates currents. Channel activity seems to be regulated by a calmodulin-dependent mechanism with a negative feedback mechanism. Promotes cell-cell junction formation in skin keratinocytes and plays an important role in the formation and/or maintenance of functional intercellular barriers. Acts as a regulator of intracellular Ca(2+) in synoviocytes. Plays an obligatory role as a molecular component in the nonselective cation channel activation induced by 4-alpha-phorbol 12,13-didecanoate and hypotonic stimulation in synoviocytes and also regulates production of IL-8. Together with PKD2, forms mechano- and thermosensitive channels in cilium. Negatively regulates expression of PPARGC1A, UCP1, oxidative metabolism and respiration in adipocytes. Regulates expression of chemokines and cytokines related to pro-inflammatory pathway in adipocytes. Together with AQP5, controls regulatory volume decrease in salivary epithelial cells. Required for normal development and maintenance of bone and cartilage. In its inactive state, may sequester DDX3X at the plasma membrane. When activated, the interaction between both proteins is affected and DDX3X relocalizes to the nucleus. In neurons of the central nervous system, could play a role in triggering voluntary water intake in response to increased sodium concentration in body fluid. In terms of biological role, non-selective calcium permeant cation channel involved in osmotic sensitivity and mechanosensitivity. Activation by exposure to hypotonicity within the physiological range exhibits an outward rectification. Also activated by phorbol esters. Has the same channel activity as isoform 1, and is activated by the same stimuli. Functionally, lacks channel activity, due to impaired oligomerization and intracellular retention. Its function is as follows. (Microbial infection) Facilitates hepatitis C virus (HCV) replication, possibly through its action on DDX3X. (Microbial infection) Facilitates Dengue virus (DENV) replication, possibly through its action on DDX3X. In terms of biological role, (Microbial infection) Facilitates Zika virus (ZIKV) replication, possibly through its action on DDX3X. The protein is Transient receptor potential cation channel subfamily V member 4 (TRPV4) of Homo sapiens (Human).